A 649-amino-acid polypeptide reads, in one-letter code: Replication protein E1 (649 aa).

A Nuclear localization signal motif is present at residues Lys-83 to Lys-85. Phosphoserine; by host occurs at positions 89, 93, and 107. A Nuclear export signal motif is present at residues Ile-106–Leu-115. Residues Thr-146–Glu-188 form a disordered region. A compositionally biased stretch (basic and acidic residues) spans Val-148–Glu-188. Residues Arg-187 to Asp-353 form a DNA-binding region region. The 151-residue stretch at Ile-452–Val-602 folds into the SF3 helicase domain. An ATP-binding site is contributed by Gly-478 to Ser-485. Residue Lys-559 forms a Glycyl lysine isopeptide (Lys-Gly) (interchain with G-Cter in SUMO) linkage.

It belongs to the papillomaviridae E1 protein family. In terms of assembly, can form hexamers. Interacts with E2 protein; this interaction increases E1 DNA binding specificity. Interacts with host DNA polymerase subunit POLA2. Interacts with host single stranded DNA-binding protein RPA1. Interacts with host TOP1; this interaction stimulates the enzymatic activity of TOP1. Phosphorylated. In terms of processing, sumoylated.

Its subcellular location is the host nucleus. It carries out the reaction Couples ATP hydrolysis with the unwinding of duplex DNA by translocating in the 3'-5' direction.. The enzyme catalyses ATP + H2O = ADP + phosphate + H(+). ATP-dependent DNA 3'-5' helicase required for initiation of viral DNA replication. It forms a complex with the viral E2 protein. The E1-E2 complex binds to the replication origin which contains binding sites for both proteins. During the initial step, a dimer of E1 interacts with a dimer of protein E2 leading to a complex that binds the viral origin of replication with high specificity. Then, a second dimer of E1 displaces the E2 dimer in an ATP-dependent manner to form the E1 tetramer. Following this, two E1 monomers are added to each half of the site, which results in the formation of two E1 trimers on the viral ori. Subsequently, two hexamers will be created. The double hexamer acts as a bi-directional helicase machinery and unwinds the viral DNA and then recruits the host DNA polymerase to start replication. This Human papillomavirus 11 protein is Replication protein E1.